Consider the following 608-residue polypeptide: DNA mismatch repair protein MutL (608 aa).

The protein belongs to the DNA mismatch repair MutL/HexB family.

In terms of biological role, this protein is involved in the repair of mismatches in DNA. It is required for dam-dependent methyl-directed DNA mismatch repair. May act as a 'molecular matchmaker', a protein that promotes the formation of a stable complex between two or more DNA-binding proteins in an ATP-dependent manner without itself being part of a final effector complex. The chain is DNA mismatch repair protein MutL from Anoxybacillus flavithermus (strain DSM 21510 / WK1).